The primary structure comprises 1233 residues: Anion exchange protein 3 (1233 aa).

A compositionally biased stretch (pro residues) spans methionine 1–glycine 11. Disordered stretches follow at residues methionine 1–histidine 320 and aspartate 431–arginine 500. At methionine 1–cysteine 709 the chain is on the cytoplasmic side. The segment covering aspartate 58 to phenylalanine 73 has biased composition (basic and acidic residues). Basic residues-rich tracts occupy residues histidine 74–arginine 97 and arginine 104–glutamate 113. The segment covering glycine 137–alanine 153 has biased composition (acidic residues). Residues serine 168, serine 171, serine 176, and serine 199 each carry the phosphoserine modification. Residues glutamine 201–valine 216 show a composition bias toward low complexity. The segment covering aspartate 268–serine 290 has biased composition (basic and acidic residues). At arginine 296 the chain carries Omega-N-methylarginine. Low complexity predominate over residues serine 437–valine 450. Positions histidine 482–arginine 500 are enriched in basic and acidic residues. 4 helical membrane-spanning segments follow: residues valine 710 to glycine 732, leucine 738 to phenylalanine 775, valine 795 to valine 817, and isoleucine 827 to phenylalanine 848. The segment at valine 710–valine 1233 is membrane (anion exchange). Residue asparagine 874 is glycosylated (N-linked (GlcNAc...) asparagine). The chain crosses the membrane as a helical span at residues alanine 894–leucine 911. Over arginine 912 to arginine 926 the chain is Cytoplasmic. 5 helical membrane-spanning segments follow: residues isoleucine 927–isoleucine 947, proline 981–methionine 1003, leucine 1029–alanine 1050, valine 1084–serine 1129, and methionine 1156–leucine 1192. The S-palmitoyl cysteine moiety is linked to residue cysteine 1166.

Belongs to the anion exchanger (TC 2.A.31) family.

The protein resides in the cell membrane. It carries out the reaction hydrogencarbonate(in) + chloride(out) = hydrogencarbonate(out) + chloride(in). Its function is as follows. Sodium-independent anion exchanger which mediates the electroneutral exchange of chloride for bicarbonate ions across the cell membrane. May be involved in the regulation of intracellular pH, and the modulation of cardiac action potential. In Oryctolagus cuniculus (Rabbit), this protein is Anion exchange protein 3 (SLC4A3).